We begin with the raw amino-acid sequence, 210 residues long: NAD(P)H-hydrate epimerase (210 aa).

The region spanning 11–210 (AHNFDDYTIN…TVADIGIYEP (200 aa)) is the YjeF N-terminal domain. 60 to 64 (NNGGD) contacts (6S)-NADPHX. Asparagine 61 and aspartate 123 together coordinate K(+). Residues 127–133 (GVGLSRD) and aspartate 156 contribute to the (6S)-NADPHX site. Threonine 159 is a binding site for K(+).

It belongs to the NnrE/AIBP family. K(+) is required as a cofactor.

The enzyme catalyses (6R)-NADHX = (6S)-NADHX. It catalyses the reaction (6R)-NADPHX = (6S)-NADPHX. In terms of biological role, catalyzes the epimerization of the S- and R-forms of NAD(P)HX, a damaged form of NAD(P)H that is a result of enzymatic or heat-dependent hydration. This is a prerequisite for the S-specific NAD(P)H-hydrate dehydratase to allow the repair of both epimers of NAD(P)HX. The polypeptide is NAD(P)H-hydrate epimerase (Oenococcus oeni (strain ATCC BAA-331 / PSU-1)).